The primary structure comprises 466 residues: ATP-dependent protease ATPase subunit HslU (466 aa).

Residues I18, 60 to 65 (GVGKTE), D279, E344, and R416 contribute to the ATP site.

The protein belongs to the ClpX chaperone family. HslU subfamily. A double ring-shaped homohexamer of HslV is capped on each side by a ring-shaped HslU homohexamer. The assembly of the HslU/HslV complex is dependent on binding of ATP.

It is found in the cytoplasm. Its function is as follows. ATPase subunit of a proteasome-like degradation complex; this subunit has chaperone activity. The binding of ATP and its subsequent hydrolysis by HslU are essential for unfolding of protein substrates subsequently hydrolyzed by HslV. HslU recognizes the N-terminal part of its protein substrates and unfolds these before they are guided to HslV for hydrolysis. The polypeptide is ATP-dependent protease ATPase subunit HslU (Syntrophomonas wolfei subsp. wolfei (strain DSM 2245B / Goettingen)).